The following is a 131-amino-acid chain: Holo-[acyl-carrier-protein] synthase (131 aa).

Mg(2+)-binding residues include Asp-8 and Glu-63.

Belongs to the P-Pant transferase superfamily. AcpS family. Mg(2+) serves as cofactor.

It localises to the cytoplasm. The catalysed reaction is apo-[ACP] + CoA = holo-[ACP] + adenosine 3',5'-bisphosphate + H(+). In terms of biological role, transfers the 4'-phosphopantetheine moiety from coenzyme A to a Ser of acyl-carrier-protein. The protein is Holo-[acyl-carrier-protein] synthase of Shewanella piezotolerans (strain WP3 / JCM 13877).